The sequence spans 350 residues: UDP-N-acetylenolpyruvoylglucosamine reductase (350 aa).

In terms of domain architecture, FAD-binding PCMH-type spans 24 to 195 (HVDATARWLL…VAVEFNLPLL (172 aa)). The active site involves arginine 172. Residue serine 245 is the Proton donor of the active site. Glutamate 342 is a catalytic residue.

It belongs to the MurB family. It depends on FAD as a cofactor.

Its subcellular location is the cytoplasm. The catalysed reaction is UDP-N-acetyl-alpha-D-muramate + NADP(+) = UDP-N-acetyl-3-O-(1-carboxyvinyl)-alpha-D-glucosamine + NADPH + H(+). The protein operates within cell wall biogenesis; peptidoglycan biosynthesis. Functionally, cell wall formation. This chain is UDP-N-acetylenolpyruvoylglucosamine reductase, found in Xanthomonas campestris pv. campestris (strain B100).